The following is a 253-amino-acid chain: Hydroxyacylglutathione hydrolase (253 aa).

7 residues coordinate Zn(2+): H54, H56, D58, H59, H112, D131, and H169.

The protein belongs to the metallo-beta-lactamase superfamily. Glyoxalase II family. As to quaternary structure, monomer. It depends on Zn(2+) as a cofactor.

It carries out the reaction an S-(2-hydroxyacyl)glutathione + H2O = a 2-hydroxy carboxylate + glutathione + H(+). It participates in secondary metabolite metabolism; methylglyoxal degradation; (R)-lactate from methylglyoxal: step 2/2. Functionally, thiolesterase that catalyzes the hydrolysis of S-D-lactoyl-glutathione to form glutathione and D-lactic acid. The protein is Hydroxyacylglutathione hydrolase of Bartonella tribocorum (strain CIP 105476 / IBS 506).